Here is a 226-residue protein sequence, read N- to C-terminus: Deoxyribose-phosphate aldolase (226 aa).

The active-site Proton donor/acceptor is D96. The Schiff-base intermediate with acetaldehyde role is filled by K157. K185 serves as the catalytic Proton donor/acceptor.

Belongs to the DeoC/FbaB aldolase family. DeoC type 1 subfamily.

It localises to the cytoplasm. It catalyses the reaction 2-deoxy-D-ribose 5-phosphate = D-glyceraldehyde 3-phosphate + acetaldehyde. The protein operates within carbohydrate degradation; 2-deoxy-D-ribose 1-phosphate degradation; D-glyceraldehyde 3-phosphate and acetaldehyde from 2-deoxy-alpha-D-ribose 1-phosphate: step 2/2. Functionally, catalyzes a reversible aldol reaction between acetaldehyde and D-glyceraldehyde 3-phosphate to generate 2-deoxy-D-ribose 5-phosphate. This chain is Deoxyribose-phosphate aldolase, found in Trichormus variabilis (strain ATCC 29413 / PCC 7937) (Anabaena variabilis).